Here is a 278-residue protein sequence, read N- to C-terminus: Envelope glycoprotein L (278 aa).

An N-terminal signal peptide occupies residues 1–30 (MCRRPDCGFSFSPGPVILLWCCLLLPIVSS). Residues 43 to 256 (VPAECPELTR…DKYYAGLPPE (214 aa)) enclose the gL betaherpesvirus-type domain. An intrachain disulfide couples Cys-154 to Cys-159.

It belongs to the herpesviridae glycoprotein L (gL) family. Betaherpesvirinae gL subfamily. In terms of assembly, interacts with glycoprotein H (gH); this interaction is necessary for the correct processing and cell surface expression of gH. Forms the envelope pentamer complex (PC) composed of gH, gL, UL128, UL130, and UL131A. The pentamer interacts with host NRP2. Forms the envelope trimer complex composed of gH, gL, and gO. The trimer interacts with host PDGFRA. The trimer also interacts with host EPHA2.

Its subcellular location is the virion membrane. The protein localises to the host cell membrane. The protein resides in the host Golgi apparatus. It localises to the host trans-Golgi network. Its function is as follows. The heterodimer glycoprotein H-glycoprotein L is required for the fusion of viral and plasma membranes leading to virus entry into the host cell. Acts as a functional inhibitor of gH and maintains gH in an inhibited form. Upon binding to host integrins, gL dissociates from gH leading to activation of the viral fusion glycoproteins gB and gH. In human cytomegalovirus, forms two distincts complexes to mediate viral entry, a trimer and a pentamer at the surface of the virion envelope. The gH-gL-gO trimer is required for infection in fibroblasts by interacting with host PDGFRA, and in glioblastoma cells by interacting with host EPHA2. The gH-gL-UL128-UL130-UL131A pentamer is essential for viral entry in epithelial, endothelial and myeloid cells via interaction with host NRP2. The protein is Envelope glycoprotein L of Human cytomegalovirus (strain 5160) (HHV-5).